The chain runs to 502 residues: Glycerol kinase (502 aa).

An ADP-binding site is contributed by threonine 14. Residues threonine 14, threonine 15, and serine 16 each contribute to the ATP site. Threonine 14 lines the sn-glycerol 3-phosphate pocket. An ADP-binding site is contributed by arginine 18. Arginine 84, glutamate 85, and tyrosine 136 together coordinate sn-glycerol 3-phosphate. Glycerol is bound by residues arginine 84, glutamate 85, and tyrosine 136. Histidine 232 carries the post-translational modification Phosphohistidine; by HPr. Aspartate 246 contributes to the sn-glycerol 3-phosphate binding site. Residues aspartate 246 and glutamine 247 each coordinate glycerol. 2 residues coordinate ADP: threonine 268 and glycine 311. ATP contacts are provided by threonine 268, glycine 311, glutamine 315, and glycine 412. ADP contacts are provided by glycine 412 and asparagine 416.

Belongs to the FGGY kinase family. In terms of assembly, homotetramer and homodimer (in equilibrium). The phosphoenolpyruvate-dependent sugar phosphotransferase system (PTS), including enzyme I, and histidine-containing protein (HPr) are required for the phosphorylation, which leads to the activation of the enzyme.

The enzyme catalyses glycerol + ATP = sn-glycerol 3-phosphate + ADP + H(+). The protein operates within polyol metabolism; glycerol degradation via glycerol kinase pathway; sn-glycerol 3-phosphate from glycerol: step 1/1. Its activity is regulated as follows. Activated by phosphorylation and inhibited by fructose 1,6-bisphosphate (FBP). Its function is as follows. Key enzyme in the regulation of glycerol uptake and metabolism. Catalyzes the phosphorylation of glycerol to yield sn-glycerol 3-phosphate. This chain is Glycerol kinase, found in Streptococcus pneumoniae (strain Hungary19A-6).